The following is a 98-amino-acid chain: Protein FAM24A (98 aa).

Residues 1 to 29 (MFDLRTKVMIGIASTLLIAAIMLITLVFC) form the signal peptide.

Belongs to the FAM24 family.

It localises to the secreted. This Mus musculus (Mouse) protein is Protein FAM24A (Fam24a).